A 240-amino-acid chain; its full sequence is MNESERKIVEEFQKKTGINFKNEELLFRALCHSSYANEQNQAGRKDVESNEKLEFLGDAVLELFVCEILYKKYPEAEVGDLARAKSAAASEEVLAMVSRELNLGKFLFLGKGEEKTGGRDRDSILADAFEALLAAIYLDQGYHKIKELFEEEFELYIEKIMRGEMLFDYKTALQEIVQSEHKVPPEYVLVRTEKNDGDRIFVVEVRVDGKSIAMGRGRTKKEAEKEAARIAYEKLLKERS.

The RNase III domain occupies 9–141 (VEEFQKKTGI…LLAAIYLDQG (133 aa)). Residue glutamate 54 participates in Mg(2+) binding. Aspartate 58 is an active-site residue. The Mg(2+) site is built by aspartate 127 and glutamate 130. Residue glutamate 130 is part of the active site. Residues 168 to 237 (DYKTALQEIV…ARIAYEKLLK (70 aa)) enclose the DRBM domain.

Belongs to the ribonuclease III family. As to quaternary structure, homodimer. It depends on Mg(2+) as a cofactor.

The protein localises to the cytoplasm. It catalyses the reaction Endonucleolytic cleavage to 5'-phosphomonoester.. In terms of biological role, digests double-stranded RNA. Involved in the processing of primary rRNA transcript to yield the immediate precursors to the large and small rRNAs (23S and 16S). Processes some mRNAs, and tRNAs when they are encoded in the rRNA operon. Processes pre-crRNA and tracrRNA of type II CRISPR loci if present in the organism. In Thermotoga petrophila (strain ATCC BAA-488 / DSM 13995 / JCM 10881 / RKU-1), this protein is Ribonuclease 3.